The primary structure comprises 364 residues: NADH-quinone oxidoreductase subunit H (364 aa).

8 helical membrane-spanning segments follow: residues leucine 15–leucine 35, alanine 84–isoleucine 104, valine 123–glycine 143, isoleucine 169–valine 189, tyrosine 206–alanine 226, leucine 257–phenylalanine 277, leucine 302–valine 322, and isoleucine 341–glycine 361.

Belongs to the complex I subunit 1 family. NDH-1 is composed of 14 different subunits. Subunits NuoA, H, J, K, L, M, N constitute the membrane sector of the complex.

The protein localises to the cell inner membrane. The catalysed reaction is a quinone + NADH + 5 H(+)(in) = a quinol + NAD(+) + 4 H(+)(out). NDH-1 shuttles electrons from NADH, via FMN and iron-sulfur (Fe-S) centers, to quinones in the respiratory chain. The immediate electron acceptor for the enzyme in this species is believed to be ubiquinone. Couples the redox reaction to proton translocation (for every two electrons transferred, four hydrogen ions are translocated across the cytoplasmic membrane), and thus conserves the redox energy in a proton gradient. This subunit may bind ubiquinone. The protein is NADH-quinone oxidoreductase subunit H of Hyphomonas neptunium (strain ATCC 15444).